A 446-amino-acid polypeptide reads, in one-letter code: Protein odr-4 homolog (446 aa).

2 helical membrane-spanning segments follow: residues 81-101 and 424-444; these read MLPG…ELSK and MGVV…FNYF.

It belongs to the ODR-4 family.

It localises to the membrane. May play a role in the trafficking of a subset of G-protein coupled receptors. In Gallus gallus (Chicken), this protein is Protein odr-4 homolog (ODR4).